Reading from the N-terminus, the 328-residue chain is Protein-glutamine deamidase Cif (328 aa).

The segment at 1–68 (MLEHGVMKIP…TNRTGENPMI (68 aa)) is disordered. A compositionally biased stretch (polar residues) spans 52–63 (RSSSISNTNRTG). Catalysis depends on residues Cys-156, His-211, and Gln-231.

The protein belongs to the Cif family.

The protein localises to the secreted. The protein resides in the host nucleus. The enzyme catalyses L-glutaminyl-[protein] + H2O = L-glutamyl-[protein] + NH4(+). Protein-glutamine deamidase effector that inhibits the host cell cycle and other key cellular processes such as the actin network and programmed-cell death. Acts by mediating the side chain deamidation of 'Gln-40' of host NEDD8, converting it to glutamate, thereby abolishing the activity of cullin-RING-based E3 ubiquitin-protein ligase complexes (CRL complexes). Inactivation of CRL complexes prevents ubiquitination and subsequent degradation of the cyclin-dependent kinase inhibitors CDKN1A/p21 and CDKN1B/p27, leading to G1 and G2 cell cycle arrests in host cells. Deamidation of 'Gln-40' of host NEDD8 also triggers macrophage-specific programmed cell death. Also able to catalyze deamidation of 'Gln-40' of host ubiquitin in vitro; however, NEDD8 constitutes the preferred substrate in vivo. Also regulates the host NF-kappa-B signaling via activation of MAPK/ERK cascade: activation of host MAPK/ERK cascade is independent of CRL complexes inhibition, suggesting that Cif has other host protein targets than NEDD8. This chain is Protein-glutamine deamidase Cif, found in Burkholderia pseudomallei (strain K96243).